The following is a 722-amino-acid chain: Polyribonucleotide nucleotidyltransferase (722 aa).

Mg(2+)-binding residues include aspartate 495 and aspartate 501. Residues 561-620 (PRLYVMKINPEKIREVIGKGGETIRSITKDTGCEINIEEDGTITIASVSSEGAEAAKKRI) form the KH domain. Positions 630–700 (GKVYEGTVVK…DRGRIRLSIK (71 aa)) constitute an S1 motif domain.

This sequence belongs to the polyribonucleotide nucleotidyltransferase family. It depends on Mg(2+) as a cofactor.

The protein resides in the cytoplasm. It carries out the reaction RNA(n+1) + phosphate = RNA(n) + a ribonucleoside 5'-diphosphate. Its function is as follows. Involved in mRNA degradation. Catalyzes the phosphorolysis of single-stranded polyribonucleotides processively in the 3'- to 5'-direction. The protein is Polyribonucleotide nucleotidyltransferase of Chromobacterium violaceum (strain ATCC 12472 / DSM 30191 / JCM 1249 / CCUG 213 / NBRC 12614 / NCIMB 9131 / NCTC 9757 / MK).